Consider the following 351-residue polypeptide: N-acetyl-gamma-glutamyl-phosphate reductase (351 aa).

Residue cysteine 154 is part of the active site.

Belongs to the NAGSA dehydrogenase family. Type 1 subfamily.

It localises to the cytoplasm. The catalysed reaction is N-acetyl-L-glutamate 5-semialdehyde + phosphate + NADP(+) = N-acetyl-L-glutamyl 5-phosphate + NADPH + H(+). Its pathway is amino-acid biosynthesis; L-arginine biosynthesis; N(2)-acetyl-L-ornithine from L-glutamate: step 3/4. Catalyzes the NADPH-dependent reduction of N-acetyl-5-glutamyl phosphate to yield N-acetyl-L-glutamate 5-semialdehyde. This is N-acetyl-gamma-glutamyl-phosphate reductase from Prochlorococcus marinus (strain MIT 9515).